The chain runs to 350 residues: Histidinol-phosphate aminotransferase (350 aa).

Position 220 is an N6-(pyridoxal phosphate)lysine (Lys-220).

It belongs to the class-II pyridoxal-phosphate-dependent aminotransferase family. Histidinol-phosphate aminotransferase subfamily. As to quaternary structure, homodimer. Pyridoxal 5'-phosphate serves as cofactor.

It catalyses the reaction L-histidinol phosphate + 2-oxoglutarate = 3-(imidazol-4-yl)-2-oxopropyl phosphate + L-glutamate. Its pathway is amino-acid biosynthesis; L-histidine biosynthesis; L-histidine from 5-phospho-alpha-D-ribose 1-diphosphate: step 7/9. This Macrococcus caseolyticus (strain JCSC5402) (Macrococcoides caseolyticum) protein is Histidinol-phosphate aminotransferase.